We begin with the raw amino-acid sequence, 213 residues long: ATP-dependent dethiobiotin synthetase BioD (213 aa).

13–18 (GIGKTV) provides a ligand contact to ATP. Thr-17 lines the Mg(2+) pocket. Residue Lys-33 is part of the active site. Glu-100 contributes to the Mg(2+) binding site. Residues 100 to 103 (EGAG) and 184 to 186 (PHL) contribute to the ATP site.

The protein belongs to the dethiobiotin synthetase family. As to quaternary structure, homodimer. Mg(2+) serves as cofactor.

Its subcellular location is the cytoplasm. The catalysed reaction is (7R,8S)-7,8-diammoniononanoate + CO2 + ATP = (4R,5S)-dethiobiotin + ADP + phosphate + 3 H(+). It functions in the pathway cofactor biosynthesis; biotin biosynthesis; biotin from 7,8-diaminononanoate: step 1/2. Functionally, catalyzes a mechanistically unusual reaction, the ATP-dependent insertion of CO2 between the N7 and N8 nitrogen atoms of 7,8-diaminopelargonic acid (DAPA, also called 7,8-diammoniononanoate) to form a ureido ring. This is ATP-dependent dethiobiotin synthetase BioD from Rhodopseudomonas palustris (strain BisA53).